A 367-amino-acid polypeptide reads, in one-letter code: Germination protease (367 aa).

Residues 1 to 15 (MKEPLDLSKYSVRTD) constitute a propeptide that is removed on maturation.

It belongs to the peptidase A25 family. In terms of assembly, homotetramer. Autoproteolytically processed. The inactive tetrameric zymogen termed p46 autoprocesses to a smaller form termed p41, which is active only during spore germination.

The enzyme catalyses Endopeptidase action with P4 Glu or Asp, P1 preferably Glu &gt; Asp, P1' hydrophobic and P2' Ala.. Initiates the rapid degradation of small, acid-soluble proteins during spore germination. The polypeptide is Germination protease (Bacillus cereus (strain AH187)).